Reading from the N-terminus, the 470-residue chain is ATP synthase subunit beta (470 aa).

155-162 is a binding site for ATP; it reads GGAGVGKT.

The protein belongs to the ATPase alpha/beta chains family. As to quaternary structure, F-type ATPases have 2 components, CF(1) - the catalytic core - and CF(0) - the membrane proton channel. CF(1) has five subunits: alpha(3), beta(3), gamma(1), delta(1), epsilon(1). CF(0) has three main subunits: a(1), b(2) and c(9-12). The alpha and beta chains form an alternating ring which encloses part of the gamma chain. CF(1) is attached to CF(0) by a central stalk formed by the gamma and epsilon chains, while a peripheral stalk is formed by the delta and b chains.

The protein localises to the cell membrane. It catalyses the reaction ATP + H2O + 4 H(+)(in) = ADP + phosphate + 5 H(+)(out). Functionally, produces ATP from ADP in the presence of a proton gradient across the membrane. The catalytic sites are hosted primarily by the beta subunits. The protein is ATP synthase subunit beta of Staphylococcus saprophyticus subsp. saprophyticus (strain ATCC 15305 / DSM 20229 / NCIMB 8711 / NCTC 7292 / S-41).